The following is an 805-amino-acid chain: MSLTKTKRVSDVAKELGVKSKEIIEFLNEYYPRPDGKPWKASHGLDEQALEMIYDAFGIKEEEEKEEVVTEQAQAPAEVEEKKEEEKKEEVIVEEVVEEKKPEVIVEEIEEKKEEEEKKEEEKPKKSVEELIKEILEKKEKEKEKKKVEKERKEEKVRVVEVKKEERKEEKKEEKKEEEKPKIKMSKKEREIMRKLEHAVEKEKKKQEKREKEKKKKEEEVKIIYIPEVITVRELAELLDVPANKVIAELMKRGVLATINQPVPPEVAVEVAESFGYLAEVKKEEEELEEEALLKEEEEREEELQPRPPIVVVMGHVDHGKTTLLDRIRKTNVAEREKGGITQHIGASQVELPDGRKITFLDTPGHEAFTTLRARGAKVTDISVLVVAADDGVMPQTIEAINHAKAFNVPIIVAVNKIDKPNADPMKVRRELSEHGLIPEEWGGDTIFVDISAKTGQNVDQLLEMILLLADILELKANPNKKARGTIIESKLDRKRGPVATVIVEDGTLRVGDHFVAGTTYGRVRAMFDDKGRQVKEAPPSTPVEVLGFEELPEAGDELIVVDDERTAREIAEKRKEKKEREEKLQTIRLEDIYKKIQTGETKELRIVLKTDTMGSLEALKKSLEELSNEKVQVKIIHGAVGGITENDIMLAKASGAIVIGFNTRPDPKARELMEKEKVDVRLYGVIYEAIEDVKKALVGLLEPIKKEEVIGMAEVRATFKIKKVGTVAGCYVLNGKLVRGAKARLIREGVVIYDGEIESLKRFKEDVQEVTAGYECGVKLKDYNDVKVGDQIECYEIRYEKPTL.

2 disordered regions span residues 68–89 (VVTE…EKKE) and 141–215 (KEKE…KEKK). Basic and acidic residues predominate over residues 79 to 89 (VEEKKEEEKKE). The tr-type G domain occupies 306 to 474 (PRPPIVVVMG…MILLLADILE (169 aa)). Residues 315-322 (GHVDHGKT) form a G1 region. 315–322 (GHVDHGKT) is a GTP binding site. The tract at residues 340-344 (GITQH) is G2. Positions 362-365 (DTPG) are G3. Residues 362 to 366 (DTPGH) and 416 to 419 (NKID) contribute to the GTP site. The segment at 416-419 (NKID) is G4. The segment at 452-454 (SAK) is G5.

This sequence belongs to the TRAFAC class translation factor GTPase superfamily. Classic translation factor GTPase family. IF-2 subfamily.

The protein resides in the cytoplasm. In terms of biological role, one of the essential components for the initiation of protein synthesis. Protects formylmethionyl-tRNA from spontaneous hydrolysis and promotes its binding to the 30S ribosomal subunits. Also involved in the hydrolysis of GTP during the formation of the 70S ribosomal complex. This chain is Translation initiation factor IF-2 (infB), found in Aquifex aeolicus (strain VF5).